A 124-amino-acid polypeptide reads, in one-letter code: WAP four-disulfide core domain protein 2 (124 aa).

Positions 1–27 (MPACRPGPLAGALLLGLLLLGLPRVPG) are cleaved as a signal peptide. 2 WAP domains span residues 29–73 (EVEK…CHLP) and 74–123 (NEKE…VTPI). Disulfide bonds link Cys-36/Cys-62, Cys-45/Cys-66, Cys-49/Cys-61, Cys-55/Cys-70, Cys-80/Cys-110, Cys-93/Cys-114, Cys-97/Cys-109, and Cys-103/Cys-119. Asn-44 carries N-linked (GlcNAc...) asparagine glycosylation.

Homotrimer; disulfide-linked. In terms of tissue distribution, epididymis. Highest levels are found in the caput and proximal cauda regions. Lower levels in the distal cauda. Not detected in the efferent ducts.

It localises to the secreted. In terms of biological role, broad range protease inhibitor. Possible function in sperm maturation. The polypeptide is WAP four-disulfide core domain protein 2 (WFDC2) (Canis lupus familiaris (Dog)).